A 290-amino-acid polypeptide reads, in one-letter code: Acetyl-coenzyme A carboxylase carboxyl transferase subunit beta (290 aa).

The 263-residue stretch at isoleucine 28–aspartate 290 folds into the CoA carboxyltransferase N-terminal domain. Positions 32, 35, 51, and 54 each coordinate Zn(2+). The segment at cysteine 32–cysteine 54 adopts a C4-type zinc-finger fold.

Belongs to the AccD/PCCB family. As to quaternary structure, acetyl-CoA carboxylase is a heterohexamer composed of biotin carboxyl carrier protein (AccB), biotin carboxylase (AccC) and two subunits each of ACCase subunit alpha (AccA) and ACCase subunit beta (AccD). Zn(2+) is required as a cofactor.

Its subcellular location is the cytoplasm. The enzyme catalyses N(6)-carboxybiotinyl-L-lysyl-[protein] + acetyl-CoA = N(6)-biotinyl-L-lysyl-[protein] + malonyl-CoA. Its pathway is lipid metabolism; malonyl-CoA biosynthesis; malonyl-CoA from acetyl-CoA: step 1/1. Component of the acetyl coenzyme A carboxylase (ACC) complex. Biotin carboxylase (BC) catalyzes the carboxylation of biotin on its carrier protein (BCCP) and then the CO(2) group is transferred by the transcarboxylase to acetyl-CoA to form malonyl-CoA. In Bacillus velezensis (strain DSM 23117 / BGSC 10A6 / LMG 26770 / FZB42) (Bacillus amyloliquefaciens subsp. plantarum), this protein is Acetyl-coenzyme A carboxylase carboxyl transferase subunit beta.